We begin with the raw amino-acid sequence, 314 residues long: DNA-directed RNA polymerase subunit alpha (314 aa).

Residues 1–228 form an alpha N-terminal domain (alpha-NTD) region; sequence MIEIEKPKIE…EHLNIFVGLT (228 aa). The segment at 246–314 is alpha C-terminal domain (alpha-CTD); the sequence is EKVLEMTIEE…ELGLGLRKDD (69 aa).

This sequence belongs to the RNA polymerase alpha chain family. Homodimer. The RNAP catalytic core consists of 2 alpha, 1 beta, 1 beta' and 1 omega subunit. When a sigma factor is associated with the core the holoenzyme is formed, which can initiate transcription.

The catalysed reaction is RNA(n) + a ribonucleoside 5'-triphosphate = RNA(n+1) + diphosphate. Functionally, DNA-dependent RNA polymerase catalyzes the transcription of DNA into RNA using the four ribonucleoside triphosphates as substrates. In Bacillus pumilus (strain SAFR-032), this protein is DNA-directed RNA polymerase subunit alpha.